Reading from the N-terminus, the 633-residue chain is Chaperone protein HtpG (633 aa).

Residues 1–344 (MSLQPQAETL…SNDLPLNISR (344 aa)) are a; substrate-binding. The tract at residues 345–560 (ELLQSNEVIN…ENEMSGHLQR (216 aa)) is b. A c region spans residues 561–633 (LLIQTGQDFM…KGLNELLLDS (73 aa)).

Belongs to the heat shock protein 90 family. In terms of assembly, homodimer.

The protein resides in the cytoplasm. Molecular chaperone. Has ATPase activity. The polypeptide is Chaperone protein HtpG (Coxiella burnetii (strain RSA 493 / Nine Mile phase I)).